The primary structure comprises 420 residues: Calreticulin (420 aa).

The N-terminal stretch at 1–25 is a signal peptide; sequence MAIRKGSSYAVAALLALASVAAVAG. N-linked (GlcNAc...) asparagine glycosylation occurs at asparagine 57. An alpha-D-glucoside contacts are provided by tyrosine 115, lysine 117, tyrosine 134, and aspartate 141. Tandem repeats lie at residues 197-208, 216-227, 233-244, 251-262, 266-276, 280-290, and 294-304. The tract at residues 197–262 is 4 X approximate repeats; that stretch reads KHTGSIYEHW…DAKKPEDWDD (66 aa). A compositionally biased stretch (basic and acidic residues) spans 213-258; that stretch reads KIKDPEAKKPEDWDDKEYIPDPEDKKPEGYDDIPKEIPDPDAKKPE. A disordered region spans residues 213–285; that stretch reads KIKDPEAKKP…PEYKGPWKQK (73 aa). The 3 X approximate repeats stretch occupies residues 266-304; sequence GEWTAPTIPNPEYKGPWKQKKIKNPNYQGKWKAPMIDNP. Glutamate 324 is a binding site for an alpha-D-glucoside. Basic and acidic residues predominate over residues 355–381; sequence GKHKEAEKAAFDEAEKKKEEEDAAKGG. Residues 355 to 420 form a disordered region; it reads GKHKEAEKAA…DSDDEKHDEL (66 aa). Acidic residues predominate over residues 382 to 402; that stretch reads DDEDDDLEDEEDDEKADEDKA. A compositionally biased stretch (basic and acidic residues) spans 403–420; the sequence is DSDAEDGKDSDDEKHDEL. Positions 417–420 match the Prevents secretion from ER motif; that stretch reads HDEL.

This sequence belongs to the calreticulin family.

It localises to the endoplasmic reticulum lumen. In terms of biological role, molecular calcium-binding chaperone promoting folding, oligomeric assembly and quality control in the ER via the calreticulin/calnexin cycle. This lectin may interact transiently with almost all of the monoglucosylated glycoproteins that are synthesized in the ER. The polypeptide is Calreticulin (CRT) (Zea mays (Maize)).